A 194-amino-acid chain; its full sequence is Peptidyl-tRNA hydrolase (194 aa).

Tyrosine 17 is a tRNA binding site. Histidine 22 serves as the catalytic Proton acceptor. 3 residues coordinate tRNA: phenylalanine 68, asparagine 70, and asparagine 116.

The protein belongs to the PTH family. As to quaternary structure, monomer.

The protein localises to the cytoplasm. It carries out the reaction an N-acyl-L-alpha-aminoacyl-tRNA + H2O = an N-acyl-L-amino acid + a tRNA + H(+). Its function is as follows. Hydrolyzes ribosome-free peptidyl-tRNAs (with 1 or more amino acids incorporated), which drop off the ribosome during protein synthesis, or as a result of ribosome stalling. In terms of biological role, catalyzes the release of premature peptidyl moieties from peptidyl-tRNA molecules trapped in stalled 50S ribosomal subunits, and thus maintains levels of free tRNAs and 50S ribosomes. In Histophilus somni (strain 2336) (Haemophilus somnus), this protein is Peptidyl-tRNA hydrolase.